A 7481-amino-acid polypeptide reads, in one-letter code: MNHIPVNRGVCLMGRSQNSEFETASDEPIAVIGLSCRLPKASGPQELWQLLDDGASAVTRVPADRETPPSTEEESADGEAAGARWGGFLDRVDTFDAGFFGISPREAAAMDPQQRLVLELSWEALEGAGLVPATLRDTGLGVFVGAARDDYATLYRRREGRAVDHHAMTGLHRSLIANRISYALGAHGPSMVVDTGQSSSLVAVHLACESLRRGESDIALAGGVNLNIAAESARETAAFGGLSPDGQCFTFDARANGFVRGEGGGLVVLKTLRRALADGDLVHGVILASAVNNDGPSDTLTTPSRRAQESLLTRVYRRAGVTPTEVGYVELHGTGTKVGDPIEAAALGAVLGTGRDTPLPVGSIKTNIGHLEGAAGIAGLIKALLQLRRRRLVPSLNFSTPNPDIPLDALNLRVQQESAPWATPSGGGRTLVAGVSSFGMGGTNCHVVVSAAPVPEDGETTSEAGATGPDSGPALLPWVVSARSPQALRDQAGRLAAWADSPAGREASPVDIGWSLATSRTHFEYRAVVSGSDRDELVASLRALASGSPVTAAGAVDGGGRLGLVFSGQGSQRAGMGRELYVAFPVFAEAFDEVCGVLDEVMGALPPSEGWAGSLREVMFEVSSDLLDETGFTQPALFAFEVALYRLLESWGVAGEVVAGHSVGEIAAVHVAGVLSLADACALVAARGRLMQGLPSGGAMVAVEASEEEVTALLAGREGEVGIGAVNGPRSVVVSGGVAVVEEVAAHFAGLGRRARRLKVSHAFHSPLMDPMLEDFGRVVAGLSFAVPELTVVSGLTGAVVSADELCSVGYWVRHAREAVRFADAVGAMAGVGVGRFVEVGPGGVLSALVRECLAEGGAGSVVAAVRGNRAEPVALLSAVGELFADGYPVDWTAYFAGWPAARVELPTYAFQRSRHWLENVPELAVSTTPPAVPREPVTPDSDHPDPVETVRQLTAHVLGLTAAADVEMTRSFKDLGFDSLMSVELRDRLCAATGLSLATTLLYDHPSPAETAEFVRARLTGDEAAAVEVVAARAVEDEPIAVVAMSCRFPGGVRTPEDLWELVRDRVDAVSVFPSDRGWNADAGLFPPAGGFLYDGHHFDAEFFGISPREALAMDPQQRLLLETSWEAFERAGIDPVSLRGSRTGVFVGATAQDYTPKLGEPADGLEGHLLTGGTVSVASGRISYFLGLEGPAVTVDTACSSSLVSLHLACRSLRQGETTLALAGGVTLMATPGMFAEFSRQGGLAADGRCKAFAEAADGTGWAEGVGLVLLERLSDARRNGHPVLAVVRGSAVNQDGASNGLTAPNGPSQQRVIRQALADARLAPADVDLMEAHGTGTRLGDPIEAQALLATYGQGRSGDRPLWLGSVKSNIGHTQAAAGVAGLIKTVMAMRHGTMPATLHVDRPSSHVDWSTGAVELLTEAQPWPDTERPRRAAVSSFGVSGTNAHVILEQATEPAALDAAPDAIVSDAVVAWPLSARDVGALREQAVRLVARVTGDPYVRPADVGHSLAATRSSFEHRAVVVGRERAELLAGLEALASGETAANLATGRASADGAGKVVFVFPGQGSQWPGMGLELAAHSPVFAAVLEDCGRALAAYVDWDGHTLHEVLAQEDGAPSLERVDVVQPALWAVMVALAALWRSHGVQPDAVVGHSQGEIAAACVAGALTLDEAAQVVSLRSRAITALAGAGQMVSVPLPEADTAEWIRPWADAGQIGIAAVNGPGSTVVSGDSAAMDELMEALAAQDVRARRIPVDYASHSPQVARIRDELLHALDGLTPRPATVPVFSTVTGEWLDDTTPMDAEYWYRNLRQTVRFEEAVRALADSGCGVFIEASPHPVLTIGVQETLDVLDRTGVVTGSLRRQKGGPDRFLSSLAQVHTHGGRVDWDTVFAGTGATRTDLPTYPFQRHRYWLERPQAPAVAPAASPAASVSETDSTRYRVVFKPLPEPTAARLSGTWLLVVPDTDEPDARVDAVTGALVTAGATVERIVVEAGADRADLAELLAALATDVGGVRGVVSLLALSEDADAMRPSVPSGLASTLTLVQALGDADVSAPLWCLTRGAVSVGASDRLDSPVQALVWGLGRAAAVEHPERWGGLLDLPATLTGRVLDRLVGVLAADGDEDQVAVRAAGVFGRRLVRGNSAPTRIDHSWQAGGTVLVTGGTGALGARVARWLVDSGAEHVVVASRQGADAPGADRLRDELTGLGARVTPVACDVSDRSAVAELVDRCAEQGDPIRAVVHTAGVGVTKPLADTTPDDLAVSFDAKVAGATHLADALGADLDAFVLFSSAAGVWGSGGQGAYGAANAYLDALAAQRAADGLAATAVAWGPWDGGGMSADAAVIDMDALRRSGLTAMDPDRAIDALDRALTDGETALTVVDVDWTRFAEVFTTARRSPLLADLPEAARLVGPAPTARENSSPVAARLAKASSAAEGRRVLLDLVRGRVADVLGHATPDTIRADRPFKDLGFNSLMTLELRSGLNEATGLRLSATTLFDHPTPSALAEHLAGELLGTPRAEAGPEMPATAPEVTEDPIAIVAMSCRFPGGVGSPEALWRLVADRRDVISGMPADRGWDIDGIYDPVPGVPGRTYTRQGGFLDGVGEFDAEFFGISPREATAMDPQQRLLLETSWEAFERAGIDPTQLRGDSVGVFVGCTGQDYVPRLHETSDELGGYALTGAAGSVASGRVAYTFGLEGPAVTVDTGCSASLVALHLAVQSLSRGECSLALAGGVTVMSNPGTFIEFSRQRGLAADGRCKAFSDSADGTGWAEGVGMLLVERLSDARRNGHEVLAVVRGSAINQDGASNGLTAPNGRSQQRVIRQALASASLTPAEVDVVEAHGTGTKLGDPIEAQALLATYGQDRPAERPLLLGALKSNIGHTQAAAGVAGVIKMVLAMRHGVAPQTLHVEQPTAEVDWSAGAVELLTEARPWPDADRPRRAGVSAFGVGGTNAHVIIEEAQSAPAQERTAPEPPAALPWLVSGATPDALRAQAERLLTHLADQPETHAADVAYSLSLTRSSLDHRAAVVAADRDELLAGLAALAEGRSAPGLVRGAPHSGDRVAFVFPGQGSQWPGMAQELAAAFPAFAARLRACEDALAEFVDWSLTDVLSEAPDAPPLDRVDVVQPVLWAVMVSLAELWRSYGVEPDAVLGHSQGEIAAACVAGALTLQDAARVVALRSKAIVAIAGQGGMLSVPLSREGLRPHLARWQDRLSVAAVNGPETVVLSGDVQAVDGLCAELQGEQIRAKKIQVDYASHSAHVEAIEAELFDALAPITPRAGSVPFFSTVTGDWYDTTGLDAGYWYRNLRQTVELHRATEALVEQGFGVFVESSPHPVLAVGMQDTVEAAGGDAVILGSLRRDDGGPDRFLRSLAEAHTHAVGVDWHALFTDGAGHRVELPTYAFQRKRYWLQDTAPEHRADAPAVDPVDAAFWEAVEREDLDALAGVLDLGTPDDTASLDTVLPALPVLSSWRRKRLDRSTVDAWRYRVEWRRIDDAPAPATLTGTWLVVIPEGYEADERVTASARALAERGADVVEVRVDEAGEDRTALAERLSDTGADTGPVAGVLSFLALAEQGFPQHPEVPTGLALTLHLVQALGDAGIDAPLWSVTSGAVSTGDDEAPSHPVQAHIWGMGRVAALEHSERWGGLVDLPEAPDEQAARRLGAVLADTRGEDQVAIRPSGLYGRRLARAAATEAGERQRWTPRGTVLITGGTGALGAHVARRLAAQGAEHLVLVSRSGEAAPGADDLRTKLGVPVTVAACDIADRDQVAALLARLEADGTPVRTVVHTAGVARLTPLAQTDLAELADVLSGKAAGARHLLELLDLDNLDTFVLFSSIAAAWGVADHGAYAAANAYLDAMALQYRAQGLPVSSVGWGPWDGDGMVSLNKLLARRGIPVIAPDLAITALQQALDERDTYVAVADVDWDRFTQVFTSARPSPLLADFTETAADDRETASATAHGTDSELVRRLNALPEDERAQALQDLVLTEAAAVLGHTTTDALGAVRPYRDLGFDSLTSVEFRNRLRDATGLALPATLVFDHPTPQATTEYLLQRIAGDKPIVDRASSSAVAAVEADDPIAIVAMGCRYPGGVASPEELWELMAAEGDAISGFPTDRGWDLDALYDPDPDRAGHTYVREGGFLHDAAEFDAEFFGISPREASAMDPQQRLLLETSWEAFERAGIDPAALRGSATGVFVGSNYQDYGLGSGSGSQQSSGVSEGHELIGSAPSVLSGRLSYTFGLEGPAVTVDTACSSSLVALHLAVQSLRQGESDLALAGGVAYMANPRAFVGFSRQRGLARDARCKAFADRADGMTLAEGVGLVLLERLSDARRLGHPVLAVVRGSAINQDGASNGLTAPNGPAQQRVIRQALANARLTPSEVDVVEAHGTGTALGDPIEAQALLATYGQERVEGQPLWLGSVKSNIGHTQAAAGVASVIKTVLAMGRGTVPATLHVDRPSSHVDWSAGAVELLTEARAWPENGHPRRAGVSSFGISGTNAHVILEQAPAESGEPPQQDLPVDGESAASVVPWVVSARSVRALQAQAGQLAAWAASPAGEQASPADVAQALATTRTFFEYRTVVVGGDRAELVETLRSLSTDPSAAGTVRRADTDGGGRLGLVFSGQGSQRAGMGRELYVAFPVFAEAFDEVCGVLDEVMGALPPSEGWAGSLREVMFDVAGGSLDETGFTQPALFAFEVALYRLLESWGVAGEVVAGHSVGEIAAVHVAGVLSLADACALVAARGRLMQGLPSGGAMVAVEASEEEVTALLAGREGEVGIGAVNGPRSVVVSGGVAVVEEVAAHFAGLGRRARRLKVSHAFHSPLMDPMLEDFGRVVAGLSFAVPELTVVSGLTGAVVSADELCSVGYWVRHAREAVRFADAVGAMAGVGVGRFVEVGPGGVLSALVRECLAEGGAGSVVAAVRGNRAEPVALVSAVGELFADGYPVDWTAYFAGWPAARVELPTYAFQRSRYWLEELAGTAVRRTEAGGQDEVDAAFWEAVEQGDLSSLGTGEGVDGEARLADVLPVLSSWRRQAGQVSLADSWRYRVTWNALPEPGVASFGGTWLLLAPAGSEAAGSLVRSLAEAMAEHGAEVVTVDLGHPDSDRARDALAEQITGRLDGLAPGQVGGVVSLLALAEGTDPHHPTVSRGLALTLSAVQALGDAGVTAPLWCLTRGAVSAGATSGPDEPVQAQVWGLGRVAALEHPDRWGGLLDLPEQVDSRTVRRLVRALAAGHRPGGEDQIALRTAGVLARRLVQDAAPAGDSVAWTPSGTVLVTGGTGAVGGHVARWLAARGAERVVLVSRRGPEAPGAQALHDELTEAGVRVRLVACDLRDQEAVTALVAGLADEGDLTAVVHAAGVLDDGVLASLSVERCAEVLAAKAQAAHHLDLATREVDLDAFVLFSSASGVLGSAGQANYAAANAYLDALAELRHALGLPAVSLAWGRWADGGMADQDVVAGRLDRDGWPAMAAEAALNAMARAVTAGRPAVMVADVDWQRFAPAFTAARPSPLLSALPQAQLPTAAAHGPAEGEQSSWASRLAELPAAEQQTALLDLIRGQVASVLGHASVQTIDPARAFKEIGFDSLTAVELRNRLNAATGLALPTTLVFDYPTPEALAEYVGSEVLGTSSSAAVGGPLVVAAVDEPVAIIGMSCRFPGGVQSPEELWDLVAGGRDTISSFPADRGWDIDTLFDPDGERSGTSSTRYGAFLDGAADFDPAFFDIGPREATAMDPQQRLLLETAWEAFERAGIDPAALRGSATGVFTGTNGQDYATLASGAAAEFEGYLGIGNAGSVISGRLAYTFGLEGPAMTVDTACSASLVALHLAAQALRQGECSLALAGGATVMATPGAFVEFSRQRGLAPDGRCKAFSASADGTGWGEGAGMLLLERLSDAERNGHPILAVVRGSAVNQDGASNGLTAPNGPAQQRVIRQALANARLSASEVDVVEAHGTGTKLGDPIEAQALLATYGQDRAEDRPLWLGSVKSNLGHTQAAAGVAGIIKSVMAMRHGTLPATLHVDEPTPEVNWSTGAVELLTESRPWPATDHVRRAAVSSFGVSGTNAHVILEQAADPVAEAESGAALVPDAVPVPWVVSARSADAVREQARRLHTHLMTGREWRPADVGYSLATARSRFEHRAVVLGEDQGELLEALEALAEGRGDSRVRVGAGLAGGRTGFVFAGQGSQRLGMGGRLREMFPVFGEAWDEVVAELDGRLGRPLGEVVFAEEGSEQASLVDRTEFTQPALFAFEVALFRLLESWGVVPDVVAGHSIGELAAAYVAGVLSLSDACALVVARGRLMQALPAGGAMVAVQVTEAEARRLVEGEPSGAVDIAAVNGPESVVIAGDEDVVLRVQEIVRGRGRKTKRLTVSHAFHSPRMEPMLDEFRRVAETVTYHEPRIAVVSAVSGEVAGAELRSAEYWTRHVREAVRFYDAVRCLRSEGVSTFVEVGPDGALSALGQDCLVGEEARGTEFVSTVRAGRDEAESVVAAVGAAHVRGVPVDWAAYYAPYGPRRADLPTYAFEHQRYWLDTSARPGRDATGLGLGSAEHPLLGAAVALADGDGVLLTGRLSLATHPWLADHQVQGAVLFPGTAFVELALRAGEQVGADCVEELTLEVPLVLPERGGVQVQVVVGAADEQGGRPVTVHSRPETGVDEPWTRHATGVLASGAATVPAETGELAVWPPQGATAVDIDGLYDRLVDGGFGYGPVFQGLRAVWRRGSEVFAEVALDDTHRDGAGEFGLHPALLDAALHAIGFGEFVSDGGAGVLPFSWNGVHLYASGADALRVRVSGVGVGANEVALVVADGSGRPVAAVESLVLRPVSADTIAAGAGARQSLFRVGWRQVAVPDQAGAGEWVALDRGAGWAQGEGCEVLPDLAALGSAVSAGRSVPRLVVAHFAADREVPVTAGVRGVTAEGLELIQSWLADERFADSRLVIMTRQAVAVDAGEGVFDLGAAALWGLVRTAQSEQPGRVVLVDVDDLDAVSRVVGIGDEPQLAVRDGRVFVPRLMRAEAIDGVPVWDPEGTLLITGASGALGGVVARHVVREWGVRHLVLASRRGAEAPGMTELVAELGELGASAAPVACDVADRDALAAVLAGIPAVHRLAGVVHAAGVLDDGVVGSLTPERLETVLAPKADAAWHLHELAAELDLSVFVLFSSAASVFGGAGQGNYAAANAFLDALAARRRADGLVATSLSWGLWDQAGGMTGQLGEADVARMSRSGVLPISVGEALPLLDAGVTGGDAWLAPVRLDLAALRQQAIATGGVPALLRDLVRVPNRRKAETGGSSTGGSRSTLLDKLAGLTDAEREQELLDFVCEHTAAVLGHSGAGMVDPGRGFLEAGVDSLAAVELRNRIGGVLGIRLSATLVFDYPSPVLLAGHIGEQLALDEPAPEPMMAAELERLEAAVTAGRFDDASRDEVAVRLRKLLTYFDTVADTARGETDDGDVASASVDELFALLDEELDDR.

The interval 24 to 1020 (ASDEPIAVIG…ETAEFVRARL (997 aa)) is loading module (LM). The Ketosynthase family 3 (KS3) 1 domain maps to 26-451 (DEPIAVIGLS…GTNCHVVVSA (426 aa)). Residues 60 to 80 (RVPADRETPPSTEEESADGEA) are disordered. Q197 acts as the For decarboxylation activity of LM in catalysis. Catalysis depends on S662, which acts as the For acyltransferase activity of LM. The 76-residue stretch at 945–1020 (PDPVETVRQL…ETAEFVRARL (76 aa)) folds into the Carrier 1 domain. The residue at position 980 (S980) is an O-(pantetheine 4'-phosphoryl)serine. The region spanning 1038–1454 (DEPIAVVAMS…GTNAHVILEQ (417 aa)) is the Ketosynthase family 3 (KS3) 2 domain. Module regions lie at residues 1038–2517 (DEPI…AGEL), 2538–4063 (EDPI…LQRI), 4084–5636 (DDPI…GSEV), and 5655–7400 (DEPV…GEQL). Residues C1201, H1336, and H1376 each act as for beta-ketoacyl synthase 1 activity in the active site. In terms of domain architecture, Carrier 2 spans 2442–2517 (RVLLDLVRGR…ALAEHLAGEL (76 aa)). S2477 carries the O-(pantetheine 4'-phosphoryl)serine modification. Residues 2538 to 2964 (EDPIAIVAMS…GTNAHVIIEE (427 aa)) form the Ketosynthase family 3 (KS3) 3 domain. Residues C2711, H2846, and H2886 each act as for beta-ketoacyl synthase 2 activity in the active site. The 76-residue stretch at 3988–4063 (QALQDLVLTE…ATTEYLLQRI (76 aa)) folds into the Carrier 3 domain. S4023 bears the O-(pantetheine 4'-phosphoryl)serine mark. One can recognise a Ketosynthase family 3 (KS3) 4 domain in the interval 4084 to 4514 (DDPIAIVAMG…GTNAHVILEQ (431 aa)). Catalysis depends on for beta-ketoacyl synthase 3 activity residues C4261, H4396, and H4436. The region spanning 5561–5636 (TALLDLIRGQ…ALAEYVGSEV (76 aa)) is the Carrier 4 domain. Position 5596 is an O-(pantetheine 4'-phosphoryl)serine (S5596). In terms of domain architecture, Ketosynthase family 3 (KS3) 5 spans 5655-6081 (DEPVAIIGMS…GTNAHVILEQ (427 aa)). Residues C5828, H5963, and H6003 each act as for beta-ketoacyl synthase 4 activity in the active site. Residues 6561 to 6685 (HPLLGAAVAL…GVLASGAATV (125 aa)) are N-terminal hotdog fold. Positions 6561–6841 (HPLLGAAVAL…LRPVSADTIA (281 aa)) constitute a PKS/mFAS DH domain. The Proton acceptor; for dehydratase activity role is filled by H6593. The segment at 6700–6841 (ATAVDIDGLY…LRPVSADTIA (142 aa)) is C-terminal hotdog fold. Catalysis depends on D6761, which acts as the Proton donor; for dehydratase activity. One can recognise a Carrier 5 domain in the interval 7325-7400 (QELLDFVCEH…LLAGHIGEQL (76 aa)). An O-(pantetheine 4'-phosphoryl)serine modification is found at S7360.

Homodimer. The loading module (LM, residues 13-926) dimerizes. LM cross-links to its cognate acyl-carrier domain in a manner that seems physiological; mutation of residues in the 2 domains alters reactions efficiency in a manner predicted by the cross-linked crystal. The cofactor is pantetheine 4'-phosphate.

The protein operates within antibiotic biosynthesis. Its function is as follows. First protein in the synthesis of the 16-membered macrolide antibiotics FD-891 and FD-892. Composed of 5 modules; the first is a loading module (LM) that synthesizes a starter unit used by the first elongation module for polyketide chain elongation. The starter unit is extended by multiple rounds of addition of malonyl-CoA or methylmalonyl-CoA, and other modifications to help generate the final products. The loading module (residues 1-927, LM with an inactive acyltransferase domain) preferentially decarboxylates malonyl-GfsA acyl carrier protein of the LM (ACP-LM) over methylmalonyl-GfsA ACP-LM and has no activity on malonyl-CoA or methymalonyl-CoA. LM decarboxylates malonyl-ACP-LM better than the malonyl-ACP-1 module of GfsA (i.e. the next module in the same protein) and has no activity on other malonyl-ACP modules. The protein is Polyketide synthase GfsA of Streptomyces halstedii.